A 305-amino-acid chain; its full sequence is Protoheme IX farnesyltransferase (305 aa).

9 helical membrane-spanning segments follow: residues 31–51 (VMSLVIFTGFVGMWLAPYSVH), 52–72 (PFIAGIAVVCIALGAGSAGAI), 96–118 (VIESDEALSFGLITGFFAVFFMA), 122–144 (NLLASFLLLFTIFYYICIYTIWL), 151–171 (NIVIGGVSGALPPVIGYAAVS), 180–200 (ILFLIIFIWTPPHSWALALFC), 225–245 (ILIYSILLFIVSLMPFFIGMN), 247–267 (FIYLIISGILGVVFLYYAGSL), and 281–301 (FAYSIFYLFFIFLLLYSTNTI).

Belongs to the UbiA prenyltransferase family. Protoheme IX farnesyltransferase subfamily.

It is found in the cell inner membrane. It carries out the reaction heme b + (2E,6E)-farnesyl diphosphate + H2O = Fe(II)-heme o + diphosphate. The protein operates within porphyrin-containing compound metabolism; heme O biosynthesis; heme O from protoheme: step 1/1. In terms of biological role, converts heme B (protoheme IX) to heme O by substitution of the vinyl group on carbon 2 of heme B porphyrin ring with a hydroxyethyl farnesyl side group. The sequence is that of Protoheme IX farnesyltransferase from Rickettsia peacockii (strain Rustic).